The chain runs to 271 residues: 2,3,4,5-tetrahydropyridine-2,6-dicarboxylate N-succinyltransferase (271 aa).

Substrate is bound by residues Arg102 and Asp139.

This sequence belongs to the transferase hexapeptide repeat family. In terms of assembly, homotrimer.

The protein resides in the cytoplasm. It carries out the reaction (S)-2,3,4,5-tetrahydrodipicolinate + succinyl-CoA + H2O = (S)-2-succinylamino-6-oxoheptanedioate + CoA. Its pathway is amino-acid biosynthesis; L-lysine biosynthesis via DAP pathway; LL-2,6-diaminopimelate from (S)-tetrahydrodipicolinate (succinylase route): step 1/3. In Coxiella burnetii (strain Dugway 5J108-111), this protein is 2,3,4,5-tetrahydropyridine-2,6-dicarboxylate N-succinyltransferase.